A 229-amino-acid chain; its full sequence is Cell division topological specificity factor homolog, chloroplastic (229 aa).

A chloroplast-targeting transit peptide spans 1–30 (MAMSSGTLRISATLVSPYHHHHRNRLSLPS). Residues 35–141 (VDFTGFISNG…KMILFSDRCD (107 aa)) are interaction with MIND1. The tract at residues 142–169 (VSDEAKRKIVNNIIHALSDFVEIESEEK) is homodimerization.

The protein belongs to the MinE family. In terms of assembly, homodimer. Interacts with MIND1. These interactions are required for proper intraplastidic localization. Binds to ARC3. In terms of tissue distribution, expressed in green tissues, especially at the shoot apex. Also present in leaves, stems, buds, and flowers, especially in sepals, siliques (tip and base), and anthers (mostly in pollen grains).

Its subcellular location is the plastid. It localises to the chloroplast. Acts as a topological specificity factor during plastid division and specify plastid constriction sites (such as the Z-ring) in a MCD1-dependent manner. Especially involved in epidermal plastids division in a FTSZ1-dependent manner. Required for the proper formation of FtsZ rings at the division site in nongreen plastids (e.g. etioplasts). May contribute to gravitropism in stems and hypocotyls. Stimulates MIND1 ATPase activity. In cooperation with MIND1, prevents FtsZ ring formation anywhere outside of the mid-plastids. This Arabidopsis thaliana (Mouse-ear cress) protein is Cell division topological specificity factor homolog, chloroplastic.